A 247-amino-acid chain; its full sequence is MNVLSCSINKLNGLYDISGVEVGQHFYWKIGGFQVHGQVLITSWVVIAILLGSATLAVRNPQTIPTSGQNFFEYVLEFIRDVSKTQIGEEYGPWVPFIGTMFLFIFVSNWSGALLPWKIIQLPHGELAAPTNDINTTVALALLTSVAYFYAGISKKGLGYFGKYIQPTPILLPINILEDFTKPLSLSFRLFGNILADELVVVVLVSLVPLVVPIPVMFLGLFTSGIQALIFATLAAAYIGESMEGHH.

Transmembrane regions (helical) follow at residues 38-58 (QVLI…TLAV), 95-115 (VPFI…GALL), 134-154 (INTT…AGIS), 199-219 (LVVV…VMFL), and 220-240 (GLFT…AYIG).

Belongs to the ATPase A chain family. In terms of assembly, F-type ATPases have 2 components, CF(1) - the catalytic core - and CF(0) - the membrane proton channel. CF(1) has five subunits: alpha(3), beta(3), gamma(1), delta(1), epsilon(1). CF(0) has four main subunits: a, b, b' and c.

The protein resides in the plastid. It localises to the chloroplast thylakoid membrane. In terms of biological role, key component of the proton channel; it plays a direct role in the translocation of protons across the membrane. The sequence is that of ATP synthase subunit a, chloroplastic from Daucus carota (Wild carrot).